Consider the following 816-residue polypeptide: Leucine--tRNA ligase (816 aa).

A 'HIGH' region motif is present at residues 40–51 (PYPSGSGLHVGH). Residues 576-580 (KMSKS) carry the 'KMSKS' region motif. Residue Lys-579 coordinates ATP.

This sequence belongs to the class-I aminoacyl-tRNA synthetase family.

It localises to the cytoplasm. The enzyme catalyses tRNA(Leu) + L-leucine + ATP = L-leucyl-tRNA(Leu) + AMP + diphosphate. In Chlorobium phaeobacteroides (strain DSM 266 / SMG 266 / 2430), this protein is Leucine--tRNA ligase.